Consider the following 175-residue polypeptide: Ribosome maturation factor RimM (175 aa).

Positions E96–F175 constitute a PRC barrel domain.

The protein belongs to the RimM family. In terms of assembly, binds ribosomal protein uS19.

The protein resides in the cytoplasm. In terms of biological role, an accessory protein needed during the final step in the assembly of 30S ribosomal subunit, possibly for assembly of the head region. Essential for efficient processing of 16S rRNA. May be needed both before and after RbfA during the maturation of 16S rRNA. It has affinity for free ribosomal 30S subunits but not for 70S ribosomes. This is Ribosome maturation factor RimM from Haemophilus ducreyi (strain 35000HP / ATCC 700724).